The chain runs to 629 residues: tRNA uridine 5-carboxymethylaminomethyl modification enzyme MnmG (629 aa).

Residue 13–18 (GGGHAG) coordinates FAD. 273-287 (GPRYCPSIEDKIVRF) lines the NAD(+) pocket.

The protein belongs to the MnmG family. In terms of assembly, homodimer. Heterotetramer of two MnmE and two MnmG subunits. FAD serves as cofactor.

It localises to the cytoplasm. Its function is as follows. NAD-binding protein involved in the addition of a carboxymethylaminomethyl (cmnm) group at the wobble position (U34) of certain tRNAs, forming tRNA-cmnm(5)s(2)U34. The protein is tRNA uridine 5-carboxymethylaminomethyl modification enzyme MnmG of Marinomonas sp. (strain MWYL1).